We begin with the raw amino-acid sequence, 550 residues long: Dihydroxy-acid dehydratase (550 aa).

Asp-78 is a Mg(2+) binding site. Cys-119 contributes to the [2Fe-2S] cluster binding site. Mg(2+)-binding residues include Asp-120 and Lys-121. The residue at position 121 (Lys-121) is an N6-carboxylysine. [2Fe-2S] cluster is bound at residue Cys-191. Glu-440 provides a ligand contact to Mg(2+). Ser-466 (proton acceptor) is an active-site residue.

It belongs to the IlvD/Edd family. Homodimer. [2Fe-2S] cluster is required as a cofactor. The cofactor is Mg(2+).

It carries out the reaction (2R)-2,3-dihydroxy-3-methylbutanoate = 3-methyl-2-oxobutanoate + H2O. The enzyme catalyses (2R,3R)-2,3-dihydroxy-3-methylpentanoate = (S)-3-methyl-2-oxopentanoate + H2O. It functions in the pathway amino-acid biosynthesis; L-isoleucine biosynthesis; L-isoleucine from 2-oxobutanoate: step 3/4. Its pathway is amino-acid biosynthesis; L-valine biosynthesis; L-valine from pyruvate: step 3/4. Its function is as follows. Functions in the biosynthesis of branched-chain amino acids. Catalyzes the dehydration of (2R,3R)-2,3-dihydroxy-3-methylpentanoate (2,3-dihydroxy-3-methylvalerate) into 2-oxo-3-methylpentanoate (2-oxo-3-methylvalerate) and of (2R)-2,3-dihydroxy-3-methylbutanoate (2,3-dihydroxyisovalerate) into 2-oxo-3-methylbutanoate (2-oxoisovalerate), the penultimate precursor to L-isoleucine and L-valine, respectively. This Methanococcus maripaludis (strain C5 / ATCC BAA-1333) protein is Dihydroxy-acid dehydratase.